Consider the following 481-residue polypeptide: ATP synthase subunit beta (481 aa).

ATP is bound at residue 167 to 174; sequence GGAGVGKT.

This sequence belongs to the ATPase alpha/beta chains family. F-type ATPases have 2 components, CF(1) - the catalytic core - and CF(0) - the membrane proton channel. CF(1) has five subunits: alpha(3), beta(3), gamma(1), delta(1), epsilon(1). CF(0) has three main subunits: a(1), b(2) and c(9-12). The alpha and beta chains form an alternating ring which encloses part of the gamma chain. CF(1) is attached to CF(0) by a central stalk formed by the gamma and epsilon chains, while a peripheral stalk is formed by the delta and b chains.

The protein resides in the cell membrane. It carries out the reaction ATP + H2O + 4 H(+)(in) = ADP + phosphate + 5 H(+)(out). Produces ATP from ADP in the presence of a proton gradient across the membrane. The catalytic sites are hosted primarily by the beta subunits. The protein is ATP synthase subunit beta of Corynebacterium efficiens (strain DSM 44549 / YS-314 / AJ 12310 / JCM 11189 / NBRC 100395).